Here is a 391-residue protein sequence, read N- to C-terminus: Mannose-6-phosphate isomerase (391 aa).

The Zn(2+) site is built by Gln97, His99, Glu134, and His255. Arg274 is a catalytic residue. An N6-acetyllysine modification is found at Lys280.

The protein belongs to the mannose-6-phosphate isomerase type 1 family. Zn(2+) is required as a cofactor.

The protein resides in the cytoplasm. It carries out the reaction D-mannose 6-phosphate = D-fructose 6-phosphate. Its function is as follows. Involved in the conversion of glucose to GDP-L-fucose, which can be converted to L-fucose, a capsular polysaccharide. The protein is Mannose-6-phosphate isomerase (manA) of Shigella flexneri.